Reading from the N-terminus, the 135-residue chain is uncharacterized protein (135 aa).

3 helical membrane-spanning segments follow: residues 12-32, 68-88, and 98-118; these read IPIL…YNGI, SMIG…AKFC, and GILY…FYLF.

The protein localises to the cell membrane. This is an uncharacterized protein from Methanocaldococcus jannaschii (strain ATCC 43067 / DSM 2661 / JAL-1 / JCM 10045 / NBRC 100440) (Methanococcus jannaschii).